The sequence spans 336 residues: tRNA N6-adenosine threonylcarbamoyltransferase (336 aa).

Residues His112 and His116 each coordinate Fe cation. Substrate is bound by residues 136–140, Asp169, Gly182, and Asn276; that span reads LVSGG. Fe cation is bound at residue Asp304.

This sequence belongs to the KAE1 / TsaD family. Fe(2+) is required as a cofactor.

The protein localises to the cytoplasm. The enzyme catalyses L-threonylcarbamoyladenylate + adenosine(37) in tRNA = N(6)-L-threonylcarbamoyladenosine(37) in tRNA + AMP + H(+). In terms of biological role, required for the formation of a threonylcarbamoyl group on adenosine at position 37 (t(6)A37) in tRNAs that read codons beginning with adenine. Is involved in the transfer of the threonylcarbamoyl moiety of threonylcarbamoyl-AMP (TC-AMP) to the N6 group of A37, together with TsaE and TsaB. TsaD likely plays a direct catalytic role in this reaction. The protein is tRNA N6-adenosine threonylcarbamoyltransferase of Francisella tularensis subsp. novicida (strain U112).